Reading from the N-terminus, the 658-residue chain is Glycogen debranching enzyme (658 aa).

The active-site Nucleophile is the Asp-335. Glu-370 serves as the catalytic Proton donor.

The protein belongs to the glycosyl hydrolase 13 family.

It catalyses the reaction Hydrolysis of (1-&gt;6)-alpha-D-glucosidic linkages to branches with degrees of polymerization of three or four glucose residues in limit dextrin.. The protein operates within glycan degradation; glycogen degradation. In terms of biological role, removes maltotriose and maltotetraose chains that are attached by 1,6-alpha-linkage to the limit dextrin main chain, generating a debranched limit dextrin. The sequence is that of Glycogen debranching enzyme from Erwinia tasmaniensis (strain DSM 17950 / CFBP 7177 / CIP 109463 / NCPPB 4357 / Et1/99).